The sequence spans 328 residues: dTDP-3,4-didehydro-2,6-dideoxy-alpha-D-glucose 3-reductase (328 aa).

Position 20 (arginine 20) interacts with substrate. NADP(+)-binding positions include 38 to 39 (SR), leucine 75, and histidine 80. Catalysis depends on lysine 98, which acts as the Proton donor. Positions 166 and 178 each coordinate NADP(+). Tyrosine 236 and threonine 256 together coordinate substrate.

Belongs to the Gfo/Idh/MocA family.

It carries out the reaction dTDP-4-dehydro-2,6-dideoxy-alpha-D-glucose + NADP(+) = dTDP-3,4-didehydro-2,6-dideoxy-alpha-D-glucose + NADPH + H(+). The protein operates within antibiotic biosynthesis. Its function is as follows. Involved in the biosynthesis of one of the two 2,6-deoxysugars, dTDP-L-oleandrose, attached to the macrolactone ring oleandolide to produce the aglycone antibiotic oleandomycin. Catalyzes the reduction of the C-3 keto moiety of dTDP-3,4-diketo-2,6-dideoxy-alpha-D-glucose to yield dTDP-4-keto-2,6-dideoxy-alpha-D-glucose. NADPH is the better reductant, however NADH can also be used. This Streptomyces antibioticus protein is dTDP-3,4-didehydro-2,6-dideoxy-alpha-D-glucose 3-reductase.